A 569-amino-acid polypeptide reads, in one-letter code: Proline--tRNA ligase (569 aa).

Belongs to the class-II aminoacyl-tRNA synthetase family. ProS type 1 subfamily. As to quaternary structure, homodimer.

It localises to the cytoplasm. It catalyses the reaction tRNA(Pro) + L-proline + ATP = L-prolyl-tRNA(Pro) + AMP + diphosphate. Its function is as follows. Catalyzes the attachment of proline to tRNA(Pro) in a two-step reaction: proline is first activated by ATP to form Pro-AMP and then transferred to the acceptor end of tRNA(Pro). As ProRS can inadvertently accommodate and process non-cognate amino acids such as alanine and cysteine, to avoid such errors it has two additional distinct editing activities against alanine. One activity is designated as 'pretransfer' editing and involves the tRNA(Pro)-independent hydrolysis of activated Ala-AMP. The other activity is designated 'posttransfer' editing and involves deacylation of mischarged Ala-tRNA(Pro). The misacylated Cys-tRNA(Pro) is not edited by ProRS. The polypeptide is Proline--tRNA ligase (Dehalococcoides mccartyi (strain ATCC BAA-2266 / KCTC 15142 / 195) (Dehalococcoides ethenogenes (strain 195))).